Here is a 356-residue protein sequence, read N- to C-terminus: Tyrosine recombinase XerS (356 aa).

Residues 16–121 enclose the Core-binding (CB) domain; it reads IMPWFVLDYY…ALSSLYKYLT (106 aa). The Tyr recombinase domain maps to 169–354; sequence EFLDYVDCEY…VNDEQKNALD (186 aa). Active-site residues include Arg-210, Lys-234, His-306, Arg-309, and His-332. Catalysis depends on Tyr-341, which acts as the O-(3'-phospho-DNA)-tyrosine intermediate.

This sequence belongs to the 'phage' integrase family. XerS subfamily.

Its subcellular location is the cytoplasm. Its activity is regulated as follows. FtsK is required for recombination. In terms of biological role, site-specific tyrosine recombinase, which acts by catalyzing the cutting and rejoining of the recombining DNA molecules. Essential to convert dimers of the bacterial chromosome into monomers to permit their segregation at cell division. This Streptococcus uberis (strain ATCC BAA-854 / 0140J) protein is Tyrosine recombinase XerS.